Consider the following 42-residue polypeptide: Potassium channel toxin gamma-KTx 1.6 (42 aa).

4 cysteine pairs are disulfide-bonded: cysteine 5–cysteine 23, cysteine 11–cysteine 34, cysteine 20–cysteine 39, and cysteine 24–cysteine 41.

It belongs to the ergtoxin family. Gamma-KTx 1 subfamily. As to expression, expressed by the venom gland.

It is found in the secreted. Its function is as follows. Blocks Kv11/ERG potassium channels. This Centruroides exilicauda (Bark scorpion) protein is Potassium channel toxin gamma-KTx 1.6.